Consider the following 379-residue polypeptide: MSKLDGFIEEHDRESNIDSGARLESTKPSPKVGSPAQRVRQNGVKSPILQTQATPAKPSEQEHPLKETPTRATAGGKMTRSNTLKRLSLIQPVISPETTPKEHRQQQATRNRSRSVVSVHSRSSSSASEQLADATKDVNALLQLLANKELELLETKHKIEELKKTLTQEEKALLRQTHELQDLKTQVGKALNSGIDEQIQQQSQSSHHSPNQRSLAVPTSHTPGNESRPAHAKKESVWTKPLSFLNQFDQLIQHELEKKLNWDDVASPEKTPGAESGTLSGRSASPASYNNGNSNNNNNNNSNRGRPNEDVLGNMSSSLWSFVSDVKTGLLGINEEEEEESAEAPAVASSGESNNQLRFVGSKNNSEVELKEYNASKRQ.

Residues 1–16 (MSKLDGFIEEHDRESN) show a composition bias toward basic and acidic residues. Disordered regions lie at residues 1–133 (MSKL…QLAD), 197–235 (EQIQQQSQSSHHSPNQRSLAVPTSHTPGNESRPAHAKKE), 263–313 (DDVA…DVLG), and 332–379 (GINE…SKRQ). The segment covering 39-54 (VRQNGVKSPILQTQAT) has biased composition (polar residues). Over residues 59-69 (SEQEHPLKETP) the composition is skewed to basic and acidic residues. 2 stretches are compositionally biased toward low complexity: residues 114-128 (RSVVSVHSRSSSSAS) and 200-209 (QQQSQSSHHS). The stretch at 125–190 (SSASEQLADA…QDLKTQVGKA (66 aa)) forms a coiled coil. Residues 211–225 (NQRSLAVPTSHTPGN) show a composition bias toward polar residues. Composition is skewed to low complexity over residues 283–305 (SASPASYNNGNSNNNNNNNSNRG) and 343–353 (EAPAVASSGES). The span at 354–365 (NNQLRFVGSKNN) shows a compositional bias: polar residues. Residues 366 to 379 (SEVELKEYNASKRQ) show a composition bias toward basic and acidic residues.

Belongs to the TDA11 family.

The protein resides in the cytoplasm. This Lachancea thermotolerans (strain ATCC 56472 / CBS 6340 / NRRL Y-8284) (Yeast) protein is Topoisomerase I damage affected protein 11 (TDA11).